The primary structure comprises 150 residues: Arginine repressor (150 aa).

This sequence belongs to the ArgR family.

It is found in the cytoplasm. The protein operates within amino-acid biosynthesis; L-arginine biosynthesis [regulation]. Functionally, regulates arginine biosynthesis genes. This Clostridium botulinum (strain ATCC 19397 / Type A) protein is Arginine repressor.